The following is a 147-amino-acid chain: Cyanate hydratase (147 aa).

Active-site residues include arginine 88, glutamate 91, and serine 114.

This sequence belongs to the cyanase family.

It carries out the reaction cyanate + hydrogencarbonate + 3 H(+) = NH4(+) + 2 CO2. In terms of biological role, catalyzes the reaction of cyanate with bicarbonate to produce ammonia and carbon dioxide. This is Cyanate hydratase from Methylobacillus flagellatus (strain ATCC 51484 / DSM 6875 / VKM B-1610 / KT).